The following is a 190-amino-acid chain: uncharacterized protein (190 aa).

The protein to E.coli YdjR.

This is an uncharacterized protein from Pseudomonas putida (Arthrobacter siderocapsulatus).